The following is a 226-amino-acid chain: MKKINIAIDGPAGAGKSTISKLLAKKLGYIHIDTGAMYRAIGLKVLNSNIKSNEVEKILEVLDNTDIQIKIVAGSQLVLLDGEDVTEKIRQPSVSMYASDVSKIKEVREKLVKIQQDLAKQKGVIMDGRDIGTYVLPDAELKIFLTATAEERAKRRFLELKEKGYEVDYYQLLDEIKQRDLNDMTRELAPLRVAEDAIVIDSTNLTIEEVLQKVLELFYKVIGNEV.

Residue 10–18 (GPAGAGKST) coordinates ATP.

The protein belongs to the cytidylate kinase family. Type 1 subfamily.

The protein resides in the cytoplasm. It carries out the reaction CMP + ATP = CDP + ADP. The catalysed reaction is dCMP + ATP = dCDP + ADP. The sequence is that of Cytidylate kinase from Caldicellulosiruptor saccharolyticus (strain ATCC 43494 / DSM 8903 / Tp8T 6331).